We begin with the raw amino-acid sequence, 717 residues long: UvrABC system protein C (717 aa).

In terms of domain architecture, GIY-YIG spans 16–95 (DAPGVYRFHD…IKEYDPRFNV (80 aa)). Residues 208–243 (DTLIRKLDREMRQASEELEFERAARLRDDLEALRRA) form the UVR domain. Disordered stretches follow at residues 517–555 (TAAG…GRPR) and 696–717 (HAAL…GESQ). 2 stretches are compositionally biased toward basic and acidic residues: residues 541 to 553 (EAER…ETGR) and 707 to 717 (ESRDNAEGESQ).

The protein belongs to the UvrC family. As to quaternary structure, interacts with UvrB in an incision complex.

It localises to the cytoplasm. Functionally, the UvrABC repair system catalyzes the recognition and processing of DNA lesions. UvrC both incises the 5' and 3' sides of the lesion. The N-terminal half is responsible for the 3' incision and the C-terminal half is responsible for the 5' incision. The sequence is that of UvrABC system protein C from Saccharopolyspora erythraea (strain ATCC 11635 / DSM 40517 / JCM 4748 / NBRC 13426 / NCIMB 8594 / NRRL 2338).